The chain runs to 148 residues: Protein Turandot Z (148 aa).

An N-terminal signal peptide occupies residues 1–23 (MYFAIRLSFVLAVLFCLTGNGSA).

Belongs to the Turandot family.

The protein localises to the secreted. Functionally, a humoral factor that may play a role in stress tolerance. This chain is Protein Turandot Z, found in Drosophila sechellia (Fruit fly).